The sequence spans 555 residues: Glypican-6 (555 aa).

Positions 1–23 are cleaved as a signal peptide; the sequence is MPSWIGAVILPLLGLLLSLPAGA. Residues 348 to 357 show a composition bias toward low complexity; sequence PALRSARSAP. Disordered regions lie at residues 348–376 and 480–501; these read PALR…PTTA and GNDV…GSGC. The GPI-anchor amidated serine moiety is linked to residue Ser-529. Residues 530–555 constitute a propeptide, removed in mature form; the sequence is SAAQRGHSLLSWSLTCIVLALQRLCR.

This sequence belongs to the glypican family. Widely expressed. High expression in fetal kidney and lung and lower expressions in fetal liver and brain. In adult tissues, very abundant in ovary, high levels also observed in liver, kidney, small intestine and colon. Not detected in peripheral blood leukocytes. Detected in breast cancer cells (at protein level).

The protein resides in the cell membrane. It localises to the secreted. It is found in the extracellular space. Cell surface proteoglycan that bears heparan sulfate. Putative cell surface coreceptor for growth factors, extracellular matrix proteins, proteases and anti-proteases. Enhances migration and invasion of cancer cells through WNT5A signaling. The protein is Glypican-6 (GPC6) of Homo sapiens (Human).